The chain runs to 211 residues: MRVRNRKGATELLEANPQYVVLNPLEAKAKWRDLFGNDNPIHVEVGSGKGAFVSGMAKQNPDINYIGIDIQKSVLSYALDKVLEAGVSNIKLLWVDGSDLTDYFEDGEIDRLYLNFSDPWPKKRHEKRRLTYKTFLDTFKRILPENGEIHFKTDNRGLFEYSLVSFSQYGMKLNGVWLDLHASDFEGNVMTEYEQKFSNKGQVIYRVEAEF.

Positions 44, 69, 96, and 118 each coordinate S-adenosyl-L-methionine. Residue Asp118 is part of the active site. Lys122 contacts substrate. The interval 124–129 (RHEKRR) is interaction with RNA. Residues Asp154 and 191–194 (TEYE) contribute to the substrate site.

Belongs to the class I-like SAM-binding methyltransferase superfamily. TrmB family.

It carries out the reaction guanosine(46) in tRNA + S-adenosyl-L-methionine = N(7)-methylguanosine(46) in tRNA + S-adenosyl-L-homocysteine. It functions in the pathway tRNA modification; N(7)-methylguanine-tRNA biosynthesis. Catalyzes the formation of N(7)-methylguanine at position 46 (m7G46) in tRNA. This is tRNA (guanine-N(7)-)-methyltransferase from Streptococcus pneumoniae (strain Taiwan19F-14).